A 596-amino-acid polypeptide reads, in one-letter code: Proton channel OTOP3 (596 aa).

Positions 1-21 (MGRGARAAAAQSRWGRASRAS) are enriched in low complexity. The disordered stretch occupies residues 1 to 59 (MGRGARAAAAQSRWGRASRASVSPGRTIRSAPAVGEAQETEAAPEKENRVDVGAEERAA). The Cytoplasmic portion of the chain corresponds to 1-88 (MGRGARAAAA…RDRQAQKAGQ (88 aa)). Phosphoserine is present on residues Ser-21 and Ser-23. Residues 43–59 (APEKENRVDVGAEERAA) are compositionally biased toward basic and acidic residues. A helical transmembrane segment spans residues 89–109 (LFSGLLALNVVFLGGAFICSM). Residues 110-119 (IFNKVAVTLG) lie on the Extracellular side of the membrane. The helical transmembrane segment at 120–143 (DVWILLATLKVLSLLWLLYYVAST) threads the bilayer. The Cytoplasmic segment spans residues 144 to 159 (TRRPHAVLYQDPHAGP). The chain crosses the membrane as a helical span at residues 160 to 181 (LWVRGSLVLFGSCTFCLNIFRV). Over 182–193 (GYDVSHIRCKSQ) the chain is Extracellular. A helical membrane pass occupies residues 194–217 (LDLVFSVIEMVFIGVQTWVLWKHC). Over 218–225 (KDCVRVQT) the chain is Cytoplasmic. The chain crosses the membrane as a helical span at residues 226–248 (NFTRCGLMLTLATNLLLWVLAVT). Topologically, residues 249-295 (NDSMHREIEAELGILMEKSTGNETNTCLCLNATACEAFRRGFLMLYP) are extracellular. Residues 296–312 (FSTEYCLICCAVLFVMW) form a helical membrane-spanning segment. The Cytoplasmic portion of the chain corresponds to 313-338 (KNVGRHVAPHMGAHPATAPFHLHGAI). The chain crosses the membrane as a helical span at residues 339 to 358 (FGPLLGLLVLLAGVCVFVLF). Residues 359 to 372 (QIEASGPAIACQYF) are Extracellular-facing. A helical membrane pass occupies residues 373-395 (TLYYAFYVAVLPTMSLACLAGTA). At 396–413 (IHGLEERELDTVKNPTRS) the chain is on the cytoplasmic side. The chain crosses the membrane as a helical span at residues 414–435 (LDVVLLMGAALGQMGIAYFSIV). Residues 436–446 (AIVAKRPHELL) are Extracellular-facing. A helical transmembrane segment spans residues 447–469 (NRLILAYSLLLILQHIAQNLFII). Over 470-529 (EGLHRRPLWETVPEGLAGKQEAEPPRRGSLLELGQGLQRASLAYIHSYSHLNWKRRALKE) the chain is Cytoplasmic. Residues 530 to 547 (ISLFLILCNITLWMMPAF) traverse the membrane as a helical segment. Residues 548–566 (GIHPEFENGLEKDFYGYQI) lie on the Extracellular side of the membrane. The helical transmembrane segment at 567-589 (WFAIVNFGLPLGVFYRMHSVGGL) threads the bilayer. The Cytoplasmic portion of the chain corresponds to 590 to 596 (VEVYLGA).

Belongs to the otopetrin family. As to quaternary structure, homodimer.

It is found in the cell membrane. It carries out the reaction H(+)(in) = H(+)(out). With respect to regulation, activated by extracellular acidification. Activated by Zn(2+) under non-acidic conditions. Its function is as follows. Proton-selective channel gated by extracellular protons. The chain is Proton channel OTOP3 from Homo sapiens (Human).